The primary structure comprises 205 residues: Recombination protein RecR (205 aa).

The segment at Cys59 to Cys74 adopts a C4-type zinc-finger fold. Residues Arg82–Pro177 enclose the Toprim domain.

Belongs to the RecR family.

Functionally, may play a role in DNA repair. It seems to be involved in an RecBC-independent recombinational process of DNA repair. It may act with RecF and RecO. The protein is Recombination protein RecR of Neisseria meningitidis serogroup A / serotype 4A (strain DSM 15465 / Z2491).